A 127-amino-acid polypeptide reads, in one-letter code: Large ribosomal subunit protein eL32 (127 aa).

Positions 38 to 48 are enriched in basic and acidic residues; it reads WRRPKGIDSKM. The interval 38–66 is disordered; that stretch reads WRRPKGIDSKMRLKKKGKPRSPSIGWSSP.

The protein belongs to the eukaryotic ribosomal protein eL32 family.

This Thermococcus gammatolerans (strain DSM 15229 / JCM 11827 / EJ3) protein is Large ribosomal subunit protein eL32.